Reading from the N-terminus, the 104-residue chain is Nucleoid-associated protein Ccon26_18480 (104 aa).

Residues 16–34 (DVQKQAKQMEEESKNKEFG) are compositionally biased toward basic and acidic residues. A disordered region spans residues 16 to 38 (DVQKQAKQMEEESKNKEFGAKSG).

Belongs to the YbaB/EbfC family. In terms of assembly, homodimer.

The protein localises to the cytoplasm. It localises to the nucleoid. Binds to DNA and alters its conformation. May be involved in regulation of gene expression, nucleoid organization and DNA protection. This Campylobacter concisus (strain 13826) protein is Nucleoid-associated protein Ccon26_18480.